We begin with the raw amino-acid sequence, 466 residues long: Cysteine--tRNA ligase (466 aa).

Cys-27 provides a ligand contact to Zn(2+). Positions 29-39 match the 'HIGH' region motif; sequence PTVYNYFHIGN. Residues Cys-207, His-232, and Glu-236 each contribute to the Zn(2+) site. The short motif at 264–268 is the 'KMSKS' region element; that stretch reads KMSKS. Position 267 (Lys-267) interacts with ATP.

This sequence belongs to the class-I aminoacyl-tRNA synthetase family. Monomer. Requires Zn(2+) as cofactor.

The protein resides in the cytoplasm. The catalysed reaction is tRNA(Cys) + L-cysteine + ATP = L-cysteinyl-tRNA(Cys) + AMP + diphosphate. The sequence is that of Cysteine--tRNA ligase from Clostridium novyi (strain NT).